We begin with the raw amino-acid sequence, 696 residues long: Methionine--tRNA ligase (696 aa).

The short motif at 12–22 (PYANGPLHLGH) is the 'HIGH' region element. Residues C143, C146, C156, and C159 each contribute to the Zn(2+) site. The 'KMSKS' region signature appears at 330–334 (KMSKS). Position 333 (K333) interacts with ATP. Residues 593–696 (DFAKLDLRIG…AGAQPGMPVR (104 aa)) enclose the tRNA-binding domain.

The protein belongs to the class-I aminoacyl-tRNA synthetase family. MetG type 1 subfamily. In terms of assembly, homodimer. It depends on Zn(2+) as a cofactor.

The protein resides in the cytoplasm. The catalysed reaction is tRNA(Met) + L-methionine + ATP = L-methionyl-tRNA(Met) + AMP + diphosphate. Is required not only for elongation of protein synthesis but also for the initiation of all mRNA translation through initiator tRNA(fMet) aminoacylation. This Xanthomonas campestris pv. campestris (strain 8004) protein is Methionine--tRNA ligase.